The following is a 776-amino-acid chain: K(+) efflux antiporter 3, chloroplastic (776 aa).

The transit peptide at 1–72 (MAISTMLGSI…KVFLDTSKRF (72 aa)) directs the protein to the chloroplast. Topologically, residues 73–93 (YFQGRWSESSGRRVETYAGVD) are lumenal, thylakoid. A helical transmembrane segment spans residues 94 to 114 (VASAVDVINDLGFDTLTFLMV). Threonine 115 is a topological domain (stromal). The chain crosses the membrane as a helical span at residues 116–136 (VIIVPAFRILKASPILGFFFA). Residues 137-153 (GVVLNQFGLIRNLTDVK) are Lumenal, thylakoid-facing. Residues 154 to 174 (VLSEWGILFLLFEMGLELSLA) form a helical membrane-spanning segment. The Stromal portion of the chain corresponds to 175 to 181 (RLKALAK). A helical transmembrane segment spans residues 182–202 (FAFGMGLTQVLLCTAAFTAFE). Residues 203 to 232 (LPPNGAIGTKILEFLFHSRPDLVNIRSIDE) lie on the Lumenal, thylakoid side of the membrane. A helical membrane pass occupies residues 233–253 (AVVIGAALSLSSSAFVLQLLA). Residues 254–266 (EKGELPTRFGSAT) lie on the Stromal side of the membrane. Residues 267–287 (LGILLLQDIAVVPLLVILPVL) traverse the membrane as a helical segment. The Lumenal, thylakoid segment spans residues 288 to 296 (ESQDIGGES). Residues 297-317 (IWPMLAKESAKALGGLGILSL) traverse the membrane as a helical segment. The Stromal segment spans residues 318–338 (GGKFFLRRIFEVVAETRSSEA). Residues 339-359 (FVALCLLTVAGTSLVTQWLGF) traverse the membrane as a helical segment. At 360 to 389 (SDTLGAFLAGALLAETNFRTQIEADIRPFR) the chain is on the lumenal, thylakoid side. Residues 390–410 (GLLLGLFFVTTGTSIDMEVLF) form a helical membrane-spanning segment. Residues 411–415 (REWPN) lie on the Stromal side of the membrane. A helical membrane pass occupies residues 416 to 436 (VLSLLGGLIVIKTLIITAIGP). Residues 437-445 (RVGLTIQES) lie on the Lumenal, thylakoid side of the membrane. A helical membrane pass occupies residues 446–466 (VRVGFLLSQGGEFAFVVFSLA). Topologically, residues 467-468 (NR) are stromal. A helical membrane pass occupies residues 469 to 489 (LGVLPNELNKLLIIVVVLSMA). The Lumenal, thylakoid portion of the chain corresponds to 490 to 526 (LTPYLNQLGRKAADFLDERLDPGEKIGEDVNFDVSES). Residues 524-649 (SESIVIIGFG…KKAGATDAIL (126 aa)) enclose the RCK N-terminal domain. The chain crosses the membrane as a helical span at residues 527 to 547 (IVIIGFGQMGQVLANFLSTPL). Residues 548 to 776 (VSDSDLVGWP…FVGKADKAQD (229 aa)) are Stromal-facing. The tract at residues 728–776 (MQMKASDSNSDSAAEILQETAGLSQPPEIDDSSVNIDNGFVGKADKAQD) is disordered.

This sequence belongs to the monovalent cation:proton antiporter 2 (CPA2) transporter (TC 2.A.37) family. KEA (TC 2.A.37.1) subfamily. In terms of tissue distribution, expressed at low levels in flowers, siliques and leaves. As to expression, expressed at low levels in flowers and leaves. Most abundant splice form in all organs, including siliques, flowers, leaves and roots. Preferentially expressed in photosynthetically active tissues, including seedling cotyledons and mature leaves. In terms of tissue distribution, expressed in shoots and roots.

The protein localises to the plastid. It localises to the chloroplast membrane. The protein resides in the golgi apparatus membrane. Its subcellular location is the chloroplast thylakoid membrane. It catalyses the reaction K(+)(in) + H(+)(out) = K(+)(out) + H(+)(in). Its activity is regulated as follows. Regulated by a mechanism involving lumenal C-terminus region; a fine-tuned balance between photoprotective energy dissipation in high light and a maximum quantum yield in low light involves a reduced activity under high light. Electroneutral K(+)/H(+) efflux antiporter assuring proton efflux from the thylakoid lumen to the plastid stroma, thus increasing the membrane potential at the expense of the proton gradient (delta pH) component of the proton motive force (PMF). Promotes photosynthesis and growth in conditions where the chloroplast (cp)ATP synthase activity is low (e.g. cgl160 mutant background) by reducing the pH gradient across the thylakoid membrane. Accelerates photosynthetic acclimation in fluctuating light environments by modulating two components of the proton motive force, the proton gradient and the electric potential (delta Psi). Promotes the relaxation of photoprotective energy-dependent non-photochemical quenching (NPQ) after transitions from high to low light, thus enhancing photosystem II (PSII) quantum efficiency in fluctuating light. On transition from high to low light, slows down photoprotection by dissipating the pH gradient across the thylakoid membrane. During photosynthetic response on transition from dark to low light, involved in a sequential mechanism of adaptation; VCCN1 and CLCe first trigger the activation of photoprotection, which is later down-regulated by KEA3 to a low steady state, while adjusting electron transport. Together with the chloroplast NADH dehydrogenase-like (NDH) complex, maximizes photosynthesis efficiency after a long dark adaptation. Required in roots for rapid hyperosmotic-induced Ca(2+) responses and for osmo-sensory potentiation in hyperosmotic conditions. In terms of biological role, low K(+)/H(+) efflux antiporter activity. Its function is as follows. Low K(+)/H(+) efflux antiporter activity. Promotes non-photochemical quenching (NPQ) in high light conditions. In Arabidopsis thaliana (Mouse-ear cress), this protein is K(+) efflux antiporter 3, chloroplastic.